The primary structure comprises 313 residues: Ribosomal RNA small subunit methyltransferase H (313 aa).

S-adenosyl-L-methionine is bound by residues 37–39, D57, F82, D104, and Q111; that span reads GGH.

The protein belongs to the methyltransferase superfamily. RsmH family.

It is found in the cytoplasm. The enzyme catalyses cytidine(1402) in 16S rRNA + S-adenosyl-L-methionine = N(4)-methylcytidine(1402) in 16S rRNA + S-adenosyl-L-homocysteine + H(+). Specifically methylates the N4 position of cytidine in position 1402 (C1402) of 16S rRNA. This chain is Ribosomal RNA small subunit methyltransferase H, found in Alteromonas mediterranea (strain DSM 17117 / CIP 110805 / LMG 28347 / Deep ecotype).